Here is an 808-residue protein sequence, read N- to C-terminus: Probable ATP-dependent helicase MJ1401 (808 aa).

Residues 189–217 (YKIDELDIPEELKEIIKSRGIEELLPVQT) carry the Q motif motif. The 171-residue stretch at 221–391 (KAGLLNGDDL…QLNAKLVLYN (171 aa)) folds into the Helicase ATP-binding domain. 234-241 (SATSSGKT) contributes to the ATP binding site. A DEIH box motif is present at residues 336 to 339 (DEIH). Positions 396–585 (PLERHIIFCK…EDEEEEQILA (190 aa)) constitute a Helicase C-terminal domain.

This sequence belongs to the DEAD box helicase family.

In Methanocaldococcus jannaschii (strain ATCC 43067 / DSM 2661 / JAL-1 / JCM 10045 / NBRC 100440) (Methanococcus jannaschii), this protein is Probable ATP-dependent helicase MJ1401.